Reading from the N-terminus, the 469-residue chain is MTIKTRFAPSPTGFLHVGGARTALYSWLYARANQGEFVLRIEDTDLERSTPEACAAILEGMEWLGLNWDEGPYYQTKRFDRYNEIIAQMLEQGTAYKCYCSRERIEAMREEQAAKGEQQKYDGCCRDKAPRDTDEPFVVRFKNPTEGSVVFDDHVRGRIEISNELLDDLIIARTDGTPTYNFCVVVDDWDMGITCVVRGEDHINNTPRQINILKALNAPVPEYAHVAMILGDDGAKLSKRHGAVGVMQYRDDGYLPEALLNYLVRLGWSHGDQEVFSIEEMKQYFKLDDINKAASAFNTEKLIWLNQHYMKELAPEYVAKHLEWHMQDQNIDTANGPALAEVVSALAERAKTLKELAASSRYFYEDFAEFDETAAKKHLRGVALEPLQLLQKKFAELSEWNVEAIHQAIEATAAELELGMGKVGMPLRVAVTGAGMSPAVDLTAFLVGKARCEQRISKAIEFVANRINS.

The short motif at 9–19 (PSPTGFLHVGG) is the 'HIGH' region element. Residues Cys-98, Cys-100, Cys-125, and Asp-127 each coordinate Zn(2+). Residues 236-240 (KLSKR) carry the 'KMSKS' region motif. Lys-239 is an ATP binding site.

This sequence belongs to the class-I aminoacyl-tRNA synthetase family. Glutamate--tRNA ligase type 1 subfamily. In terms of assembly, monomer. The cofactor is Zn(2+).

The protein localises to the cytoplasm. The enzyme catalyses tRNA(Glu) + L-glutamate + ATP = L-glutamyl-tRNA(Glu) + AMP + diphosphate. Its function is as follows. Catalyzes the attachment of glutamate to tRNA(Glu) in a two-step reaction: glutamate is first activated by ATP to form Glu-AMP and then transferred to the acceptor end of tRNA(Glu). The polypeptide is Glutamate--tRNA ligase (Shewanella loihica (strain ATCC BAA-1088 / PV-4)).